Reading from the N-terminus, the 408-residue chain is Argininosuccinate synthase (408 aa).

8 to 16 (AYSGGLDTT) contacts ATP. Residue tyrosine 86 coordinates L-citrulline. Glycine 116 serves as a coordination point for ATP. L-aspartate contacts are provided by threonine 118, asparagine 122, and aspartate 123. Asparagine 122 is a binding site for L-citrulline. L-citrulline is bound by residues arginine 126, serine 177, serine 186, glutamate 263, and tyrosine 275.

This sequence belongs to the argininosuccinate synthase family. Type 1 subfamily. In terms of assembly, homotetramer.

The protein resides in the cytoplasm. The enzyme catalyses L-citrulline + L-aspartate + ATP = 2-(N(omega)-L-arginino)succinate + AMP + diphosphate + H(+). The protein operates within amino-acid biosynthesis; L-arginine biosynthesis; L-arginine from L-ornithine and carbamoyl phosphate: step 2/3. This is Argininosuccinate synthase from Agathobacter rectalis (strain ATCC 33656 / DSM 3377 / JCM 17463 / KCTC 5835 / VPI 0990) (Eubacterium rectale).